Here is a 206-residue protein sequence, read N- to C-terminus: Guanylate kinase (206 aa).

The Guanylate kinase-like domain maps to 6 to 184; sequence GILFILSGPS…AVDKVKTIIK (179 aa). Residue 13–20 coordinates ATP; the sequence is GPSGVGKG.

Belongs to the guanylate kinase family.

Its subcellular location is the cytoplasm. It catalyses the reaction GMP + ATP = GDP + ADP. In terms of biological role, essential for recycling GMP and indirectly, cGMP. In Oceanobacillus iheyensis (strain DSM 14371 / CIP 107618 / JCM 11309 / KCTC 3954 / HTE831), this protein is Guanylate kinase.